We begin with the raw amino-acid sequence, 98 residues long: Aspartyl/glutamyl-tRNA(Asn/Gln) amidotransferase subunit C (98 aa).

It belongs to the GatC family. In terms of assembly, heterotrimer of A, B and C subunits.

The catalysed reaction is L-glutamyl-tRNA(Gln) + L-glutamine + ATP + H2O = L-glutaminyl-tRNA(Gln) + L-glutamate + ADP + phosphate + H(+). It catalyses the reaction L-aspartyl-tRNA(Asn) + L-glutamine + ATP + H2O = L-asparaginyl-tRNA(Asn) + L-glutamate + ADP + phosphate + 2 H(+). Allows the formation of correctly charged Asn-tRNA(Asn) or Gln-tRNA(Gln) through the transamidation of misacylated Asp-tRNA(Asn) or Glu-tRNA(Gln) in organisms which lack either or both of asparaginyl-tRNA or glutaminyl-tRNA synthetases. The reaction takes place in the presence of glutamine and ATP through an activated phospho-Asp-tRNA(Asn) or phospho-Glu-tRNA(Gln). In Micrococcus luteus (strain ATCC 4698 / DSM 20030 / JCM 1464 / CCM 169 / CCUG 5858 / IAM 1056 / NBRC 3333 / NCIMB 9278 / NCTC 2665 / VKM Ac-2230) (Micrococcus lysodeikticus), this protein is Aspartyl/glutamyl-tRNA(Asn/Gln) amidotransferase subunit C.